Reading from the N-terminus, the 842-residue chain is Amyloid-beta A4 precursor protein-binding family A member 1 (842 aa).

Disordered regions lie at residues 1–121 (MNHL…DESA), 238–349 (RLHH…EKRD), and 366–439 (KTRT…KESR). Residue serine 82 is modified to Phosphoserine. Composition is skewed to basic and acidic residues over residues 106-115 (DGYEAERAQD) and 240-258 (HHYDERSDGESDSPEKEAE). A phosphoserine mark is found at serine 246, serine 250, serine 252, serine 267, serine 284, and serine 289. Threonine 309 bears the Phosphothreonine mark. Phosphoserine is present on residues serine 317 and serine 372. A Phosphothreonine modification is found at threonine 375. Residues 392–403 (PTRDCDDQRPVD) are compositionally biased toward basic and acidic residues. The segment covering 404–421 (GDSPSPGSSSPLGAESSS) has biased composition (low complexity). A phosphoserine mark is found at serine 406, serine 408, serine 413, and serine 573. The PID domain maps to 460 to 648 (LIDGIIFAAN…LLNTQDMYND (189 aa)). The autoinhibitory helix linker stretch occupies residues 631–648 (LSQKEYSDLLNTQDMYND). PDZ domains lie at 661 to 746 (DVFI…NIVR) and 752 to 828 (TVLI…MPAA).

As to quaternary structure, part of a multimeric complex containing STXBP1 and STX1A. Interacts with STXBP1. Component of the brain-specific heterotrimeric complex (LIN-10-LIN-2-LIN-7 complex) composed of at least APBA1, CASK, and LIN7, which associates with the motor protein KIF17 to transport vesicles along microtubules. Within the complex, interacts (via PDZ domain) with the motor protein KIF17; the interaction is direct and is required for association of KIF17 with the cargo that is to be transported. Binds to the cytoplasmic domain of amyloid protein (APP). Interacts (via PDZ 1 and 2 domains) with FSPB. Isoform 3 interacts (via its truncated PID domain) with active, GTP-bound RAB6A. Also interacts with GTP-bound RAB6B. Isoform 3 is expressed in brain.

It localises to the cytoplasm. Its subcellular location is the perinuclear region. The protein localises to the nucleus. It is found in the golgi apparatus. Putative function in synaptic vesicle exocytosis by binding to Munc18-1, an essential component of the synaptic vesicle exocytotic machinery. May modulate processing of the amyloid-beta precursor protein (APP) and hence formation of AAP-beta. Component of the LIN-10-LIN-2-LIN-7 complex, which associates with the motor protein KIF17 to transport vesicles containing N-methyl-D-aspartate (NMDA) receptor subunit NR2B along microtubules. This is Amyloid-beta A4 precursor protein-binding family A member 1 from Mus musculus (Mouse).